We begin with the raw amino-acid sequence, 241 residues long: Putative hydrolase 080R (241 aa).

The Nudix hydrolase domain maps to 50 to 241; the sequence is FPDLSFNLMV…VIKVQKIMIL (192 aa). Positions 136–157 match the Nudix box motif; that stretch reads GHCNGNEPVLSTLLREFREETT. Mg(2+) is bound by residues Glu151, Glu155, and Asp204.

Belongs to the Nudix hydrolase family.

This chain is Putative hydrolase 080R, found in Aedes vexans (Inland floodwater mosquito).